Here is a 313-residue protein sequence, read N- to C-terminus: Protein FixB (313 aa).

255 to 283 (LYLAVGISGQIQHMVGANASQTIFAINKD) serves as a coordination point for FAD.

The protein belongs to the ETF alpha-subunit/FixB family. As to quaternary structure, heterodimer of FixA and FixB.

Its pathway is amine and polyamine metabolism; carnitine metabolism. In terms of biological role, required for anaerobic carnitine reduction. May bring reductant to CaiA. The protein is Protein FixB of Escherichia coli (strain 55989 / EAEC).